The primary structure comprises 117 residues: UPF0342 protein LGAS_1451 (117 aa).

This sequence belongs to the UPF0342 family.

This Lactobacillus gasseri (strain ATCC 33323 / DSM 20243 / BCRC 14619 / CIP 102991 / JCM 1131 / KCTC 3163 / NCIMB 11718 / NCTC 13722 / AM63) protein is UPF0342 protein LGAS_1451.